Here is a 311-residue protein sequence, read N- to C-terminus: MSLKGRHLIDPNQLSLAELDNIITLGLEIYRNPNHYREICKGKILGTLFYEPSTRTRLSFESAMLRMGGTVLGFSDANTSSAKKGESIADTIRVLDDYADLLVMRHPREGAPLLASQYATVPIVNGGDGGHQHPTQTLTDLITIHHNKGKIENLKVAFCGDLLFGRTVHSLLKTLSRFPNMEFVFISPSELKIPKHLKDEVIKSNNVEIVETTFLEKHMSEIDILYMTRIQKERFFNEEEYVKLKDSYILDLQKLRNAKEDLLIMHPLPRVNEIHPEVDTDTRAKYFEQAKLGVYVRMALMALQLGVIESC.

Residues R55 and T56 each coordinate carbamoyl phosphate. L-aspartate is bound at residue K84. The carbamoyl phosphate site is built by R105, H133, and Q136. Residues R166 and R229 each contribute to the L-aspartate site. Positions 268 and 269 each coordinate carbamoyl phosphate.

It belongs to the aspartate/ornithine carbamoyltransferase superfamily. ATCase family. In terms of assembly, heterododecamer (2C3:3R2) of six catalytic PyrB chains organized as two trimers (C3), and six regulatory PyrI chains organized as three dimers (R2).

The enzyme catalyses carbamoyl phosphate + L-aspartate = N-carbamoyl-L-aspartate + phosphate + H(+). The protein operates within pyrimidine metabolism; UMP biosynthesis via de novo pathway; (S)-dihydroorotate from bicarbonate: step 2/3. Functionally, catalyzes the condensation of carbamoyl phosphate and aspartate to form carbamoyl aspartate and inorganic phosphate, the committed step in the de novo pyrimidine nucleotide biosynthesis pathway. The sequence is that of Aspartate carbamoyltransferase catalytic subunit from Alkaliphilus metalliredigens (strain QYMF).